We begin with the raw amino-acid sequence, 137 residues long: Small ribosomal subunit protein uS12 (137 aa).

Residues 1–57 (MPTINQLVRKPRKSKVEKSKSPALNVGYNSHKKVQTNVSSPQKRGVATRVGTMTPKK) are disordered. Position 102 is a 3-methylthioaspartic acid (Asp-102).

Belongs to the universal ribosomal protein uS12 family. In terms of assembly, part of the 30S ribosomal subunit. Contacts proteins S8 and S17. May interact with IF1 in the 30S initiation complex.

Its function is as follows. With S4 and S5 plays an important role in translational accuracy. Interacts with and stabilizes bases of the 16S rRNA that are involved in tRNA selection in the A site and with the mRNA backbone. Located at the interface of the 30S and 50S subunits, it traverses the body of the 30S subunit contacting proteins on the other side and probably holding the rRNA structure together. The combined cluster of proteins S8, S12 and S17 appears to hold together the shoulder and platform of the 30S subunit. This chain is Small ribosomal subunit protein uS12, found in Streptococcus pneumoniae serotype 2 (strain D39 / NCTC 7466).